The chain runs to 389 residues: Endo-chitosanase C (389 aa).

The N-terminal stretch at Met-1–Gly-22 is a signal peptide. The R3-1 repeat unit spans residues Cys-280–Cys-313. Residues Glu-320–Cys-350 form an R3-2 repeat. The R3-3 repeat unit spans residues Glu-357–Cys-387.

Belongs to the glycosyl hydrolase 75 family.

The protein resides in the secreted. It carries out the reaction Endohydrolysis of beta-(1-&gt;4)-linkages between D-glucosamine residues in a partly acetylated chitosan.. Functionally, chitosanase catalyzing the endo-type cleavage of chitosan, the deacylated form of chitin. Chitosanase may be crucial in the degradation of the deacetylated portion of chitin in the fungal cell wall. Chitoolisaccharides produced by the hydrolysis of partially N-acetylated chitosan are known to have many biological activities, including antibacterial activity, immune-enhancing effects, and elicitor activity. The chain is Endo-chitosanase C (csnC) from Aspergillus oryzae (strain ATCC 42149 / RIB 40) (Yellow koji mold).